The following is a 476-amino-acid chain: Bifunctional protein HldE (476 aa).

The interval 1-319 is ribokinase; that stretch reads MKVSLPAFEK…EALALHHGES (319 aa). 195–198 lines the ATP pocket; that stretch reads NMSE. Asp-264 is an active-site residue. Residues 345-476 form a cytidylyltransferase region; sequence MTNGCFDILH…AIIQNIMANQ (132 aa).

This sequence in the N-terminal section; belongs to the carbohydrate kinase PfkB family. It in the C-terminal section; belongs to the cytidylyltransferase family. In terms of assembly, homodimer.

It catalyses the reaction D-glycero-beta-D-manno-heptose 7-phosphate + ATP = D-glycero-beta-D-manno-heptose 1,7-bisphosphate + ADP + H(+). The catalysed reaction is D-glycero-beta-D-manno-heptose 1-phosphate + ATP + H(+) = ADP-D-glycero-beta-D-manno-heptose + diphosphate. It participates in nucleotide-sugar biosynthesis; ADP-L-glycero-beta-D-manno-heptose biosynthesis; ADP-L-glycero-beta-D-manno-heptose from D-glycero-beta-D-manno-heptose 7-phosphate: step 1/4. The protein operates within nucleotide-sugar biosynthesis; ADP-L-glycero-beta-D-manno-heptose biosynthesis; ADP-L-glycero-beta-D-manno-heptose from D-glycero-beta-D-manno-heptose 7-phosphate: step 3/4. Catalyzes the phosphorylation of D-glycero-D-manno-heptose 7-phosphate at the C-1 position to selectively form D-glycero-beta-D-manno-heptose-1,7-bisphosphate. Functionally, catalyzes the ADP transfer from ATP to D-glycero-beta-D-manno-heptose 1-phosphate, yielding ADP-D-glycero-beta-D-manno-heptose. The sequence is that of Bifunctional protein HldE from Shewanella baltica (strain OS155 / ATCC BAA-1091).